A 233-amino-acid chain; its full sequence is Small ribosomal subunit protein uS5 (233 aa).

The segment covering M1–S13 has biased composition (polar residues). Positions M1–N40 are disordered. Positions N15–N40 are enriched in basic and acidic residues. The S5 DRBM domain occupies L45 to V108.

Belongs to the universal ribosomal protein uS5 family. Part of the 30S ribosomal subunit. Contacts proteins S4 and S8.

With S4 and S12 plays an important role in translational accuracy. Its function is as follows. Located at the back of the 30S subunit body where it stabilizes the conformation of the head with respect to the body. In Bifidobacterium longum (strain NCC 2705), this protein is Small ribosomal subunit protein uS5.